Consider the following 717-residue polypeptide: Ribosomal RNA large subunit methyltransferase K/L (717 aa).

Residues 44-155 (DAYKVCIYSY…KQFVNVFLCL (112 aa)) enclose the THUMP domain.

The protein belongs to the methyltransferase superfamily. RlmKL family.

The protein resides in the cytoplasm. It carries out the reaction guanosine(2445) in 23S rRNA + S-adenosyl-L-methionine = N(2)-methylguanosine(2445) in 23S rRNA + S-adenosyl-L-homocysteine + H(+). The catalysed reaction is guanosine(2069) in 23S rRNA + S-adenosyl-L-methionine = N(2)-methylguanosine(2069) in 23S rRNA + S-adenosyl-L-homocysteine + H(+). Functionally, specifically methylates the guanine in position 2445 (m2G2445) and the guanine in position 2069 (m7G2069) of 23S rRNA. The protein is Ribosomal RNA large subunit methyltransferase K/L of Francisella tularensis subsp. holarctica (strain FTNF002-00 / FTA).